The chain runs to 207 residues: Galactoside O-acetyltransferase (207 aa).

Asn87 lines the acetyl-CoA pocket. His117 acts as the Proton donor/acceptor in catalysis. Residues Ala144, Ala162, 167–168, and Arg185 each bind acetyl-CoA; that span reads TK.

It belongs to the transferase hexapeptide repeat family. As to quaternary structure, homotrimer.

It localises to the cytoplasm. It catalyses the reaction a beta-D-galactoside + acetyl-CoA = a 6-acetyl-beta-D-galactoside + CoA. The polypeptide is Galactoside O-acetyltransferase (lacA) (Lactococcus lactis subsp. lactis (strain IL1403) (Streptococcus lactis)).